The following is a 420-amino-acid chain: Probable secreted beta-glucosidase SUN4 (420 aa).

The signal sequence occupies residues 1-24 (MKLSATTLTAASLIGYSTIVSALP). The interval 89–145 (TKSSSKVASSSESTEQIATTSSSAQTTLTSSETSTSESSVPISTSGSASTSSAASSA) is disordered. N-linked (GlcNAc...) asparagine glycosylation occurs at N395.

It belongs to the SUN family. In terms of processing, glycosylated.

It is found in the secreted. Its subcellular location is the cell wall. Functionally, involved in the remodeling of the cell wall during the various phases of yeast culture development and under various environmental conditions and plays a role in septation. In Saccharomyces cerevisiae (strain ATCC 204508 / S288c) (Baker's yeast), this protein is Probable secreted beta-glucosidase SUN4 (SUN4).